The following is a 126-amino-acid chain: Holo-[acyl-carrier-protein] synthase (126 aa).

Mg(2+) is bound by residues Asp9 and Glu58.

Belongs to the P-Pant transferase superfamily. AcpS family. The cofactor is Mg(2+).

The protein resides in the cytoplasm. It carries out the reaction apo-[ACP] + CoA = holo-[ACP] + adenosine 3',5'-bisphosphate + H(+). Functionally, transfers the 4'-phosphopantetheine moiety from coenzyme A to a Ser of acyl-carrier-protein. The sequence is that of Holo-[acyl-carrier-protein] synthase from Buchnera aphidicola subsp. Schizaphis graminum (strain Sg).